The sequence spans 911 residues: Protein translocase subunit SecA (911 aa).

Residues Gln-87, 105–109, and Asp-513 contribute to the ATP site; that span reads GEGKT. The segment at 853–911 is disordered; sequence IQLQHEQVSGLEPEAGEAPSAGEPRSEQPYVRAGRKVGRNDPCPCGSGKKFKACHGKLG. A compositionally biased stretch (low complexity) spans 862–875; that stretch reads GLEPEAGEAPSAGE. Residues Cys-895, Cys-897, Cys-906, and His-907 each coordinate Zn(2+). A compositionally biased stretch (basic residues) spans 901–911; it reads KKFKACHGKLG.

Belongs to the SecA family. As to quaternary structure, monomer and homodimer. Part of the essential Sec protein translocation apparatus which comprises SecA, SecYEG and auxiliary proteins SecDF-YajC and YidC. It depends on Zn(2+) as a cofactor.

It localises to the cell inner membrane. It is found in the cytoplasm. The enzyme catalyses ATP + H2O + cellular proteinSide 1 = ADP + phosphate + cellular proteinSide 2.. Functionally, part of the Sec protein translocase complex. Interacts with the SecYEG preprotein conducting channel. Has a central role in coupling the hydrolysis of ATP to the transfer of proteins into and across the cell membrane, serving both as a receptor for the preprotein-SecB complex and as an ATP-driven molecular motor driving the stepwise translocation of polypeptide chains across the membrane. In Teredinibacter turnerae (strain ATCC 39867 / T7901), this protein is Protein translocase subunit SecA.